Here is a 362-residue protein sequence, read N- to C-terminus: Endolytic peptidoglycan transglycosylase RlpA (362 aa).

The signal sequence occupies residues 1-17 (MRKQWLGICIAAGMLAA). The N-palmitoyl cysteine moiety is linked to residue C18. Residue C18 is the site of S-diacylglycerol cysteine attachment. Residues 198–276 (PDLSGGAGTS…PSTTPATSPA (79 aa)) form a disordered region. The span at 262–276 (PVVTAPSTTPATSPA) shows a compositional bias: low complexity. Residues 285–361 (QSASGNFMVQ…AQLQSFITTA (77 aa)) form the SPOR domain.

Belongs to the RlpA family.

It is found in the cell membrane. Functionally, lytic transglycosylase with a strong preference for naked glycan strands that lack stem peptides. The chain is Endolytic peptidoglycan transglycosylase RlpA from Escherichia coli O157:H7.